Consider the following 414-residue polypeptide: Isocitrate dehydrogenase [NADP] cytoplasmic (414 aa).

Residue serine 2 is modified to N-acetylserine. A Phosphotyrosine modification is found at tyrosine 42. 75-77 (TIT) is an NADP(+) binding site. Threonine 77 serves as a coordination point for substrate. Lysine 81 carries the post-translational modification N6-acetyllysine. Position 82 (arginine 82) interacts with NADP(+). Substrate contacts are provided by residues 94 to 100 (SPNGTIR) and arginine 109. Position 126 is an N6-succinyllysine (lysine 126). The substrate site is built by arginine 132 and lysine 212. Residues lysine 224, lysine 233, and lysine 243 each carry the N6-acetyllysine modification. Residue aspartate 252 coordinates Mn(2+). Position 260 (lysine 260) interacts with NADP(+). Mn(2+)-binding residues include aspartate 275 and aspartate 279. Position 310–315 (310–315 (GTVTRH)) interacts with NADP(+). Residue lysine 321 is modified to N6-acetyllysine. Asparagine 328 contacts NADP(+). Serine 389 carries the phosphoserine modification. Lysine 400 carries the N6-succinyllysine modification.

This sequence belongs to the isocitrate and isopropylmalate dehydrogenases family. Homodimer. Requires Mg(2+) as cofactor. Mn(2+) serves as cofactor. Post-translationally, acetylation at Lys-374 dramatically reduces catalytic activity.

It localises to the cytoplasm. Its subcellular location is the cytosol. The catalysed reaction is D-threo-isocitrate + NADP(+) = 2-oxoglutarate + CO2 + NADPH. Its function is as follows. Catalyzes the NADP(+)-dependent oxidative decarboxylation of isocitrate (D-threo-isocitrate) to 2-ketoglutarate (2-oxoglutarate), which is required by other enzymes such as the phytanoyl-CoA dioxygenase. Plays a critical role in the generation of NADPH, an important cofactor in many biosynthesis pathways. May act as a corneal epithelial crystallin and may be involved in maintaining corneal epithelial transparency. The chain is Isocitrate dehydrogenase [NADP] cytoplasmic (IDH1) from Pongo abelii (Sumatran orangutan).